We begin with the raw amino-acid sequence, 225 residues long: Dynein axonemal assembly factor 19 (225 aa).

The stretch at 8–32 (DFRELERELANALAADQKYSRENDA) forms a coiled coil.

The protein belongs to the DNAAF19/PR46b family. Homodimer.

The protein resides in the cytoplasm. It is found in the cell projection. The protein localises to the cilium. It localises to the flagellum. Functionally, dynein-attachment factor required for cilia motility. The chain is Dynein axonemal assembly factor 19 (dnaaf19) from Xenopus tropicalis (Western clawed frog).